The sequence spans 78 residues: NAD(P)H-quinone oxidoreductase subunit O (78 aa).

This sequence belongs to the complex I NdhO subunit family. NDH-1 can be composed of about 15 different subunits; different subcomplexes with different compositions have been identified which probably have different functions.

The protein resides in the cellular thylakoid membrane. The enzyme catalyses a plastoquinone + NADH + (n+1) H(+)(in) = a plastoquinol + NAD(+) + n H(+)(out). It catalyses the reaction a plastoquinone + NADPH + (n+1) H(+)(in) = a plastoquinol + NADP(+) + n H(+)(out). NDH-1 shuttles electrons from an unknown electron donor, via FMN and iron-sulfur (Fe-S) centers, to quinones in the respiratory and/or the photosynthetic chain. The immediate electron acceptor for the enzyme in this species is believed to be plastoquinone. Couples the redox reaction to proton translocation, and thus conserves the redox energy in a proton gradient. Cyanobacterial NDH-1 also plays a role in inorganic carbon-concentration. This Prochlorococcus marinus (strain MIT 9312) protein is NAD(P)H-quinone oxidoreductase subunit O.